The sequence spans 1225 residues: RNA-directed RNA polymerase VP2 (1225 aa).

The RdRp catalytic domain maps to 497 to 727; the sequence is LFLSFMPYTI…NSIVLLQQLV (231 aa).

It belongs to the reoviridae RNA-directed RNA polymerase family. Interacts with VP6.

It catalyses the reaction RNA(n) + a ribonucleoside 5'-triphosphate = RNA(n+1) + diphosphate. Functionally, RNA-directed RNA polymerase that is involved in transcription and genome replication. Following infection, it catalyzes the synthesis of fully conservative plus strands. After core assembly, which consists in recruitment of one capped plus-strand for each genomic segments and polymerase complexes, the polymerase switches mode and catalyzes the synthesis of complementary minus-strands. This is RNA-directed RNA polymerase VP2 (S2) from Lymantria dispar (Gypsy moth).